Reading from the N-terminus, the 106-residue chain is Large ribosomal subunit protein uL24 (106 aa).

Belongs to the universal ribosomal protein uL24 family. In terms of assembly, part of the 50S ribosomal subunit.

Its function is as follows. One of two assembly initiator proteins, it binds directly to the 5'-end of the 23S rRNA, where it nucleates assembly of the 50S subunit. Functionally, one of the proteins that surrounds the polypeptide exit tunnel on the outside of the subunit. The sequence is that of Large ribosomal subunit protein uL24 from Porphyromonas gingivalis (strain ATCC 33277 / DSM 20709 / CIP 103683 / JCM 12257 / NCTC 11834 / 2561).